The chain runs to 1383 residues: DNA-directed RNA polymerase subunit beta (1383 aa).

Belongs to the RNA polymerase beta chain family. As to quaternary structure, the RNAP catalytic core consists of 2 alpha, 1 beta, 1 beta' and 1 omega subunit. When a sigma factor is associated with the core the holoenzyme is formed, which can initiate transcription.

It catalyses the reaction RNA(n) + a ribonucleoside 5'-triphosphate = RNA(n+1) + diphosphate. Its function is as follows. DNA-dependent RNA polymerase catalyzes the transcription of DNA into RNA using the four ribonucleoside triphosphates as substrates. This is DNA-directed RNA polymerase subunit beta from Bartonella bacilliformis (strain ATCC 35685 / KC583 / Herrer 020/F12,63).